Here is a 209-residue protein sequence, read N- to C-terminus: MSYLFFSFEGPEGAGKTTIVRMLKDYLSEQHVDVVATREPGGIDIAEQIRAVILHPNNERMDARTEALLYAAARRQHLVEKVIPALKDGKVVLCDRFIDSSLAYQGVARGLGIDEILAINAFAIENWMPILTIYFDIDPSLGLARIRENGSREVNRLDLEELSFHEQVRKGYMVLLDRFPNRIKKVDATQPITKVFEDVWALIEPLIRK.

10 to 17 (GPEGAGKT) contacts ATP.

Belongs to the thymidylate kinase family.

It carries out the reaction dTMP + ATP = dTDP + ADP. Phosphorylation of dTMP to form dTDP in both de novo and salvage pathways of dTTP synthesis. The polypeptide is Thymidylate kinase (Anoxybacillus flavithermus (strain DSM 21510 / WK1)).